A 262-amino-acid polypeptide reads, in one-letter code: Serine/arginine-rich splicing factor 10 (262 aa).

The RRM domain maps to 10–88 (TSLFVRNVAD…RQIEIQFAQG (79 aa)). Residues Ser-23, Ser-106, and Ser-108 each carry the phosphoserine modification. The span at 116 to 126 (YRRSRSRSYER) shows a compositional bias: basic and acidic residues. The tract at residues 116–262 (YRRSRSRSYE…SWTSPKSSGH (147 aa)) is disordered. Phosphoserine occurs at positions 129, 131, and 133. The segment covering 134–150 (FDYNYRRSYSPRNSRPT) has biased composition (low complexity). Phosphoserine is present on residues Ser-158, Ser-160, and Arg-168. 2 stretches are compositionally biased toward basic residues: residues 165-186 (FKHR…SKSQ) and 194-207 (KSRS…KTRG). The segment covering 209–234 (SKTDSKTHYKSGSRYEKESRKKEPPR) has biased composition (basic and acidic residues). Over residues 252–262 (RSWTSPKSSGH) the composition is skewed to low complexity.

This sequence belongs to the splicing factor SR family. As to quaternary structure, the phosphorylated but not the dephosphorylated form interacts with TRA2B/SFRS10. The dephosphorylated form interacts with SNRNP70. Isoform 1 interacts with FUS C-terminus. Isoform 3 interacts with FUS C-terminus. Interacts with YTHDC1, leading to inhibit RNA-binding activity of SRSF10. In terms of processing, phosphorylated. Fully dephosphorylated in mitosis and partially dephosphorylated on heat shock. In terms of tissue distribution, widely expressed.

Its subcellular location is the nucleus speckle. The protein localises to the cytoplasm. Functionally, splicing factor that in its dephosphorylated form acts as a general repressor of pre-mRNA splicing. Seems to interfere with the U1 snRNP 5'-splice recognition of SNRNP70. Required for splicing repression in M-phase cells and after heat shock. Also acts as a splicing factor that specifically promotes exon skipping during alternative splicing. Interaction with YTHDC1, a RNA-binding protein that recognizes and binds N6-methyladenosine (m6A)-containing RNAs, prevents SRSF10 from binding to its mRNA-binding sites close to m6A-containing regions, leading to inhibit exon skipping during alternative splicing. May be involved in regulation of alternative splicing in neurons, with isoform 1 acting as a positive and isoform 3 as a negative regulator. This chain is Serine/arginine-rich splicing factor 10 (SRSF10), found in Homo sapiens (Human).